The primary structure comprises 540 residues: V-set and immunoglobulin domain-containing protein 10 (540 aa).

An N-terminal signal peptide occupies residues 1-30 (MAAGGSAPEPRVLVCLGALLAGWVAVGLEA). 4 Ig-like C2-type domains span residues 31-119 (VVIG…WLQV), 123-215 (PYQI…RKVT), 223-309 (PPPS…VQIR), and 311-404 (PSLL…IWLS). At 31-413 (VVIGEVHENV…SVKEPLNIGG (383 aa)) the chain is on the extracellular side. Residues asparagine 39, asparagine 46, asparagine 70, asparagine 108, asparagine 138, asparagine 171, asparagine 180, and asparagine 198 are each glycosylated (N-linked (GlcNAc...) asparagine). Cysteine 44 and cysteine 103 are joined by a disulfide. 2 disulfides stabilise this stretch: cysteine 153–cysteine 201 and cysteine 245–cysteine 290. Asparagine 326 carries an N-linked (GlcNAc...) asparagine glycan. An intrachain disulfide couples cysteine 331 to cysteine 388. The chain crosses the membrane as a helical span at residues 414 to 434 (IVGTIVSLLLLGLAIISGLLL). Residues 435-540 (HYSPVFCWKV…DIVQEEDRPV (106 aa)) lie on the Cytoplasmic side of the membrane. A compositionally biased stretch (acidic residues) spans 461–477 (DSEEEEEEEEEEEEDAA). Disordered stretches follow at residues 461–500 (DSEEEEEEEEEEEEDAAVGEQEGAREREELPKEIPKQDHI) and 513–540 (QMGNGFQDLQDDSSEEQSDIVQEEDRPV). The segment covering 482 to 500 (EGAREREELPKEIPKQDHI) has biased composition (basic and acidic residues). A compositionally biased stretch (acidic residues) spans 521 to 534 (LQDDSSEEQSDIVQ).

It localises to the membrane. The chain is V-set and immunoglobulin domain-containing protein 10 (VSIG10) from Homo sapiens (Human).